The chain runs to 419 residues: Protein distal antenna-related (419 aa).

The 52-residue stretch at 15-66 (TRGKRPLRNLTPNDKVRAIQRIHNGETKASVSRDIGVPESTLRGWCKNEQKL) folds into the HTH psq-type domain. Positions 42-62 (KASVSRDIGVPESTLRGWCKN) form a DNA-binding region, H-T-H motif. Disordered regions lie at residues 333–359 (QPGGGGPGGPSYNPNQMASGGSEPDLE) and 378–419 (EASN…DAEQ).

In terms of assembly, interacts with itself, dan, ey and dac to form a complex (or complexes) containing the RD factors. In terms of tissue distribution, coexpressed with dan in the presumptive distal antenna, but not in the leg imaginal disk. Both proteins are also expressed in the brain and the eye region of the eye-antenna disk. First detected in early L3 eye disks in cells surrounding the newly initiated morphogenetic furrow. Highly expressed in evenly spaced clusters of cells anterior to the furrow, lower levels within and posterior to the furrow.

It is found in the nucleus. Functionally, probable transcription factor with a role in the retinal determination (RD) network. Regulates ato expression and is required for normal R8 induction and differentiation. Danr appears to repress Dan expression, but Dan is required for Danr expression anterior to the morphogenetic furrow (MF). Dan and Danr lie downstream of so and require dac function for highest levels of expression. Contributes to differentiation of antenna-specific characteristics; effector gene that acts downstream of homothorax (hth), Distal-less (Dll), cut (ct) and spineless (ss) genes to control differentiation of distal antennal structures. The protein is Protein distal antenna-related of Drosophila melanogaster (Fruit fly).